A 311-amino-acid chain; its full sequence is HPr kinase/phosphorylase (311 aa).

Catalysis depends on residues histidine 138 and lysine 159. 153–160 is a binding site for ATP; that stretch reads GKSGVGKS. Residue serine 160 coordinates Mg(2+). The active-site Proton acceptor; for phosphorylation activity. Proton donor; for dephosphorylation activity is aspartate 177. The interval 201-210 is important for the catalytic mechanism of both phosphorylation and dephosphorylation; sequence LEIRGLGIIN. Glutamate 202 contributes to the Mg(2+) binding site. Residue arginine 243 is part of the active site. The segment at 264–269 is important for the catalytic mechanism of dephosphorylation; it reads PVRPGR.

This sequence belongs to the HPrK/P family. Homohexamer. Requires Mg(2+) as cofactor.

The enzyme catalyses [HPr protein]-L-serine + ATP = [HPr protein]-O-phospho-L-serine + ADP + H(+). It carries out the reaction [HPr protein]-O-phospho-L-serine + phosphate + H(+) = [HPr protein]-L-serine + diphosphate. In terms of biological role, catalyzes the ATP- as well as the pyrophosphate-dependent phosphorylation of a specific serine residue in HPr, a phosphocarrier protein of the phosphoenolpyruvate-dependent sugar phosphotransferase system (PTS). HprK/P also catalyzes the pyrophosphate-producing, inorganic phosphate-dependent dephosphorylation (phosphorolysis) of seryl-phosphorylated HPr (P-Ser-HPr). The two antagonistic activities of HprK/P are regulated by several intracellular metabolites, which change their concentration in response to the absence or presence of rapidly metabolisable carbon sources (glucose, fructose, etc.) in the growth medium. Also phosphorylates/dephosphorylates the HPr-like catabolite repression protein crh on a specific serine residue. Therefore, by controlling the phosphorylation state of HPr and crh, HPrK/P is a sensor enzyme that plays a major role in the regulation of carbon metabolism and sugar transport: it mediates carbon catabolite repression (CCR), and regulates PTS-catalyzed carbohydrate uptake and inducer exclusion. This chain is HPr kinase/phosphorylase, found in Geobacillus sp. (strain WCH70).